Consider the following 106-residue polypeptide: UPF0213 protein VPA1222 (106 aa).

The 76-residue stretch at 7 to 82 (QHWSVYLIRN…KQLTKSKKEQ (76 aa)) folds into the GIY-YIG domain.

It belongs to the UPF0213 family.

This chain is UPF0213 protein VPA1222, found in Vibrio parahaemolyticus serotype O3:K6 (strain RIMD 2210633).